Reading from the N-terminus, the 215-residue chain is Protein C' (215 aa).

The disordered stretch occupies residues 12-34 (MPSFLKKILKLRGRRQEDESRSR). Residues 15-22 (FLKKILKL) are involved in self-degradation and in host STAT1 degradation.

Belongs to the respirovirus protein C family. The different isoforms interact (via C-terminus) with unphosphorylated and phosphorylated human STAT1 (via N-terminus), favoring the formation of parallel STAT1 homodimers. The different isoforms do not interact with host STAT2. C protein interacts with L protein; this interaction has an inhibitory effect on viral transcription and replication. Protein Y2 is produced not only by alternative initiation, but also by proteolytic cleavage of C'. Only alternative initiation is detected in vitro, whereas in vivo cleavage seems to be predominant.

The protein resides in the host cytoplasm. Its function is as follows. The different products prevent the establishment of cellular antiviral state by blocking the interferon-alpha/beta (IFN-alpha/beta) and IFN-gamma signaling pathways. They inhibit IFN-alpha/beta induced tyrosine phosphorylation of STAT1 and STAT2. Blocking the IFN-alpha/beta pathway requires binding to STAT1 in the cytoplasm. They inhibit IFN-gamma induced serine phosphorylation of STAT1. Block the IFN-gamma pathway by binding to and stabilizing the parallel form of the STAT1 dimer, further inducing high-molecular-weight complex formation and inhibition of transcription by IFN-gamma. May also have a role in preventing the cell to enter apoptosis. Modulate regulation of viral transcription and replication. Overexpression inhibits the viral RNA polymerase. The absence of all C', C and Y2 proteins leads to viral delayed growth. Plays an important role in virion particles release. Modulates virion shape. The sequence is that of Protein C' (P/V/C) from Cavia cutleri (Guinea pig).